Consider the following 352-residue polypeptide: Sulfate-binding protein (352 aa).

Positions 1 to 40 (MARSAFGWGFSVIAVLMVGSITACNTTTTTEPGQGENASQ) are cleaved as a signal peptide.

Belongs to the prokaryotic sulfate-binding protein family.

The protein resides in the periplasm. In terms of biological role, this protein specifically binds sulfate and is involved in its transmembrane transport. The sequence is that of Sulfate-binding protein (sbpA) from Synechocystis sp. (strain ATCC 27184 / PCC 6803 / Kazusa).